A 663-amino-acid polypeptide reads, in one-letter code: Zinc finger protein GLI2 (663 aa).

Residues 159-186 (ISSNSNCISDSSQSKQSSESAVSSTVNP) form a disordered region. Over residues 160–182 (SSNSNCISDSSQSKQSSESAVSS) the composition is skewed to low complexity. 5 C2H2-type zinc fingers span residues 234-259 (TNCH…NNDH), 267-294 (FVCR…MRRH), 300-324 (HKCT…LRSH), 330-355 (YVCE…NRTH), and 361-386 (YVCK…KTVH). 4 disordered regions span residues 374–440 (DPSS…MEDC), 452–481 (VMCQ…DSGV), 544–578 (CSWV…SRTL), and 619–663 (SGIS…DIKL). Positions 386 to 402 (HGPDAHVTKKQRNDVHP) are enriched in basic and acidic residues. Residues 456-473 (SSPGGQSSCSSEPSPLGS) are compositionally biased toward low complexity. 2 stretches are compositionally biased toward polar residues: residues 563–578 (GNGS…SRTL) and 619–647 (SGIS…SSAD).

This sequence belongs to the GLI C2H2-type zinc-finger protein family.

It is found in the nucleus. The protein localises to the cytoplasm. Its subcellular location is the cell projection. It localises to the cilium. Functionally, functions as a transcription regulator in the hedgehog (Hh) pathway. Functions as a transcriptional activator. May also function as transcriptional repressor. Binds to the DNA sequence 5'-GAACCACCCA-3'. Is involved in the smoothened (SHH) signaling pathway. Required for normal skeleton development. The polypeptide is Zinc finger protein GLI2 (Gallus gallus (Chicken)).